The following is a 201-amino-acid chain: Small ribosomal subunit protein uS4 (201 aa).

An S4 RNA-binding domain is found at serine 91–glutamate 151.

The protein belongs to the universal ribosomal protein uS4 family. Part of the 30S ribosomal subunit. Contacts protein S5. The interaction surface between S4 and S5 is involved in control of translational fidelity.

In terms of biological role, one of the primary rRNA binding proteins, it binds directly to 16S rRNA where it nucleates assembly of the body of the 30S subunit. With S5 and S12 plays an important role in translational accuracy. This is Small ribosomal subunit protein uS4 from Corynebacterium glutamicum (strain ATCC 13032 / DSM 20300 / JCM 1318 / BCRC 11384 / CCUG 27702 / LMG 3730 / NBRC 12168 / NCIMB 10025 / NRRL B-2784 / 534).